Consider the following 336-residue polypeptide: Type II methyltransferase M.PvuII (336 aa).

2 repeat units span residues 11–113 and 181–293. Residues 196–215 form a disordered region; it reads TPKTRPSGHDIGKSFSKDNG. Positions 202-211 are enriched in basic and acidic residues; it reads SGHDIGKSFS.

It belongs to the N(4)/N(6)-methyltransferase family. N(4) subfamily. As to quaternary structure, monomer.

It carries out the reaction a 2'-deoxycytidine in DNA + S-adenosyl-L-methionine = an N(4)-methyl-2'-deoxycytidine in DNA + S-adenosyl-L-homocysteine + H(+). In terms of biological role, a beta subtype methylase, recognizes the double-stranded sequence 5'-CAGCTG-3', methylates C-4 on both strands, and protects the DNA from cleavage by the PvuII endonuclease. The sequence is that of Type II methyltransferase M.PvuII from Proteus hauseri.